The following is a 510-amino-acid chain: Bifunctional pantoate ligase/cytidylate kinase (510 aa).

Residues 1–276 (MKKVIIRKTE…CGETRLIDHV (276 aa)) form a pantoate--beta-alanine ligase region. ATP is bound at residue 29 to 36 (MGNLHNGH). Residue H36 is the Proton donor of the active site. Q61 serves as a coordination point for (R)-pantoate. Q61 is a binding site for beta-alanine. Position 150 to 153 (150 to 153 (GEKD)) interacts with ATP. Residue Q156 participates in (R)-pantoate binding. 187 to 190 (LSSR) lines the ATP pocket. A cytidylate kinase region spans residues 277 to 510 (FLMKRSPIIA…DKIPKETQIR (234 aa)).

This sequence in the N-terminal section; belongs to the pantothenate synthetase family. It in the C-terminal section; belongs to the cytidylate kinase family. Type 1 subfamily.

The protein localises to the cytoplasm. It carries out the reaction (R)-pantoate + beta-alanine + ATP = (R)-pantothenate + AMP + diphosphate + H(+). It catalyses the reaction CMP + ATP = CDP + ADP. The catalysed reaction is dCMP + ATP = dCDP + ADP. Its pathway is cofactor biosynthesis; (R)-pantothenate biosynthesis; (R)-pantothenate from (R)-pantoate and beta-alanine: step 1/1. Its function is as follows. Catalyzes the condensation of pantoate with beta-alanine in an ATP-dependent reaction via a pantoyl-adenylate intermediate. In terms of biological role, catalyzes the transfer of a phosphate group from ATP to either CMP or dCMP to form CDP or dCDP and ADP, respectively. The sequence is that of Bifunctional pantoate ligase/cytidylate kinase from Prochlorococcus marinus (strain MIT 9312).